A 331-amino-acid polypeptide reads, in one-letter code: Ketol-acid reductoisomerase (NADP(+)) (331 aa).

In terms of domain architecture, KARI N-terminal Rossmann spans 1–181 (MKVYYEKDAN…GGSRSGVIET (181 aa)). NADP(+) contacts are provided by residues 24–27 (YGSQ), Arg47, and 82–85 (DQVQ). His107 is an active-site residue. Residue Gly133 participates in NADP(+) binding. In terms of domain architecture, KARI C-terminal knotted spans 182 to 327 (TFREETETDL…GELRGMMPWL (146 aa)). Mg(2+) contacts are provided by Asp190, Glu194, Glu226, and Glu230. Residue Ser251 coordinates substrate.

Belongs to the ketol-acid reductoisomerase family. Requires Mg(2+) as cofactor.

It catalyses the reaction (2R)-2,3-dihydroxy-3-methylbutanoate + NADP(+) = (2S)-2-acetolactate + NADPH + H(+). The catalysed reaction is (2R,3R)-2,3-dihydroxy-3-methylpentanoate + NADP(+) = (S)-2-ethyl-2-hydroxy-3-oxobutanoate + NADPH + H(+). It participates in amino-acid biosynthesis; L-isoleucine biosynthesis; L-isoleucine from 2-oxobutanoate: step 2/4. It functions in the pathway amino-acid biosynthesis; L-valine biosynthesis; L-valine from pyruvate: step 2/4. Involved in the biosynthesis of branched-chain amino acids (BCAA). Catalyzes an alkyl-migration followed by a ketol-acid reduction of (S)-2-acetolactate (S2AL) to yield (R)-2,3-dihydroxy-isovalerate. In the isomerase reaction, S2AL is rearranged via a Mg-dependent methyl migration to produce 3-hydroxy-3-methyl-2-ketobutyrate (HMKB). In the reductase reaction, this 2-ketoacid undergoes a metal-dependent reduction by NADPH to yield (R)-2,3-dihydroxy-isovalerate. The sequence is that of Ketol-acid reductoisomerase (NADP(+)) from Nitratidesulfovibrio vulgaris (strain ATCC 29579 / DSM 644 / CCUG 34227 / NCIMB 8303 / VKM B-1760 / Hildenborough) (Desulfovibrio vulgaris).